Reading from the N-terminus, the 188-residue chain is UPF0232 protein RHA1_ro03670 (188 aa).

Disordered stretches follow at residues 1 to 20, 31 to 78, and 166 to 188; these read MTDDLEPTAPAAAAPEPEVK, EARA…QPFG, and PTAPSWRKGERHIRGRGPRDTYG. A compositionally biased stretch (low complexity) spans 7-16; sequence PTAPAAAAPE.

Belongs to the UPF0232 family.

The polypeptide is UPF0232 protein RHA1_ro03670 (Rhodococcus jostii (strain RHA1)).